The primary structure comprises 139 residues: Lamprin 0.9 (139 aa).

The first 19 residues, 1–19 (MAAAIQALLVLALLHLATA), serve as a signal peptide directing secretion. 8 tandem repeats follow at residues 42 to 46 (GGLGY), 47 to 51 (GGLGY), 52 to 56 (GGLGV), 57 to 61 (AGLGV), 62 to 66 (AGLGY), 67 to 71 (GGLGY), 92 to 96 (GGLGY), and 106 to 110 (GGLGY). Positions 42-110 (GGLGYGGLGY…YHHALGGLGY (69 aa)) are 8 X 5 AA approximate repeats.

In terms of assembly, the polymeric lamprin chains self-aggregate to form fibers and have secondary structures particularly rich in beta-sheets and in beta-turns.

It localises to the secreted. The protein resides in the extracellular space. It is found in the extracellular matrix. Functionally, self-aggregating protein that is part of the soluble form of lamprin. This is Lamprin 0.9 from Petromyzon marinus (Sea lamprey).